Consider the following 544-residue polypeptide: Chaperonin GroEL (544 aa).

ATP is bound by residues 30-33 (TLGP), Lys-51, 87-91 (DGTTT), Gly-415, and Asp-495.

The protein belongs to the chaperonin (HSP60) family. Forms a cylinder of 14 subunits composed of two heptameric rings stacked back-to-back. Interacts with the co-chaperonin GroES.

Its subcellular location is the cytoplasm. It catalyses the reaction ATP + H2O + a folded polypeptide = ADP + phosphate + an unfolded polypeptide.. Together with its co-chaperonin GroES, plays an essential role in assisting protein folding. The GroEL-GroES system forms a nano-cage that allows encapsulation of the non-native substrate proteins and provides a physical environment optimized to promote and accelerate protein folding. This chain is Chaperonin GroEL, found in Bartonella bacilliformis (strain ATCC 35685 / KC583 / Herrer 020/F12,63).